Reading from the N-terminus, the 348-residue chain is MARQGNFYAVRKGRETGIYNTWNECKNQVDGYGGAIYKKFNSYEQAKSFLGQPNTTSNYGSSTHAGGQVSKPHTTQKRVHRRNRPLHYSSLTSSSACSSLSSANTNTFYSVKSNVPNIESKIFNNWKDCQAYVKHKRGITFKKFEDQLAAENFISGMSAHDYKLMNISKESFESKYKLSSNTMYNKSMNVYCDGSSFGNGTSSSRAGYGAYFEGAPEENISEPLLSGAQTNNRAEIEAVSEALKKIWEKLTNEKEKVNYQIKTDSEYVTKLLNDRYMTYDNKKLEGLPNSDLIVPLVQRFVKVKKYYELNKECFKNNGKFQIEWVKGHDGDPGNEMADFLAKKGASRR.

The segment covering 54-65 (NTTSNYGSSTHA) has biased composition (polar residues). Residues 54-81 (NTTSNYGSSTHAGGQVSKPHTTQKRVHR) are disordered. An RNase H type-1 domain is found at 184 to 346 (YNKSMNVYCD…ADFLAKKGAS (163 aa)). Positions 193, 235, 264, and 338 each coordinate Mg(2+).

It belongs to the RNase H family. It depends on Mg(2+) as a cofactor.

The enzyme catalyses Endonucleolytic cleavage to 5'-phosphomonoester.. In terms of biological role, endonuclease that specifically degrades the RNA of RNA-DNA hybrids. The polypeptide is Ribonuclease H (RNH1) (Saccharomyces cerevisiae (strain ATCC 204508 / S288c) (Baker's yeast)).